The chain runs to 238 residues: Large ribosomal subunit protein uL1 (238 aa).

The protein belongs to the universal ribosomal protein uL1 family. As to quaternary structure, part of the 50S ribosomal subunit.

Binds directly to 23S rRNA. The L1 stalk is quite mobile in the ribosome, and is involved in E site tRNA release. Its function is as follows. Protein L1 is also a translational repressor protein, it controls the translation of the L11 operon by binding to its mRNA. This Saccharopolyspora erythraea (strain ATCC 11635 / DSM 40517 / JCM 4748 / NBRC 13426 / NCIMB 8594 / NRRL 2338) protein is Large ribosomal subunit protein uL1.